The sequence spans 140 residues: 3-hydroxyacyl-[acyl-carrier-protein] dehydratase FabZ (140 aa).

Residue His-48 is part of the active site.

It belongs to the thioester dehydratase family. FabZ subfamily.

The protein localises to the cytoplasm. The enzyme catalyses a (3R)-hydroxyacyl-[ACP] = a (2E)-enoyl-[ACP] + H2O. Involved in unsaturated fatty acids biosynthesis. Catalyzes the dehydration of short chain beta-hydroxyacyl-ACPs and long chain saturated and unsaturated beta-hydroxyacyl-ACPs. The polypeptide is 3-hydroxyacyl-[acyl-carrier-protein] dehydratase FabZ (Oceanobacillus iheyensis (strain DSM 14371 / CIP 107618 / JCM 11309 / KCTC 3954 / HTE831)).